Reading from the N-terminus, the 1238-residue chain is Receptor-type tyrosine-protein phosphatase eta (1238 aa).

An N-terminal signal peptide occupies residues 1–28; it reads MKPAARETRTPPRSPGLRWALLPLLLLL. Residues 29–876 lie on the Extracellular side of the membrane; it reads RQGQVLCAGA…LPQDPGVICG (848 aa). The Fibronectin type-III 1 domain occupies 39-122; the sequence is APNPIFDIEA…LNKTITTEPW (84 aa). N-linked (GlcNAc...) asparagine glycans are attached at residues Asn62, Asn78, Asn85, Asn90, Asn110, Asn114, Asn145, Asn164, Asn173, Asn182, Asn198, Asn207, Asn244, Asn253, Asn267, Asn278, Asn313, Asn317, Asn333, Asn366, Asn379, Asn398, Asn403, Asn437, Asn452, Asn488, Asn506, Asn538, Asn572, Asn576, Asn662, Asn668, Asn685, Asn691, Asn725, Asn811, and Asn838. Residues 170–266 enclose the Fibronectin type-III 2 domain; sequence PGTNNSFAFP…GQPRNKVFKT (97 aa). Fibronectin type-III domains follow at residues 270–358, 359–443, 444–527, 528–621, 622–718, and 717–803; these read QVSD…SPDQ, VSDF…TDPS, AVTD…TQYT, RPSS…TEPE, PVTS…TDPP, and PPTP…SEVL. Residues 877 to 897 traverse the membrane as a helical segment; the sequence is AVFGCIFGALAITAVGGFIFW. The Cytoplasmic portion of the chain corresponds to 898-1238; that stretch reads RKKRTDAKNN…MFGKTNGYIA (341 aa). Ser910 bears the Phosphoserine mark. One can recognise a Tyrosine-protein phosphatase domain in the interval 942–1199; it reads FAEEYEDLKL…VFLNQCVLDI (258 aa). Residues Asp1106, 1140 to 1146, and Gln1184 each bind substrate; that span reads CSAGVGR. Cys1140 serves as the catalytic Phosphocysteine intermediate.

The protein belongs to the protein-tyrosine phosphatase family. Receptor class 3 subfamily. As to quaternary structure, monomer. Interacts with CTNNB1 (phosphorylated) and JUP (phosphorylated). Interacts with FLT3 (phosphorylated). Interacts with GAB1 and GRB2. Expressed at high levels in brain, kidney, spleen and intestine, and at lower levels in liver, lung, thymus and heart. Expressed at a high level in the myeloid cell line FDC-P2, and at a lower level in the pre-B lymphoid cell line WEHI-231 and the T hybridoma cell line HB21.7.31. Not expressed in the fibroblast cell line NIH3T3 or the erythroid cell line F5-5. Expressed in macrophages.

Its subcellular location is the cell membrane. It is found in the cell projection. The protein resides in the ruffle membrane. It localises to the cell junction. It catalyses the reaction O-phospho-L-tyrosyl-[protein] + H2O = L-tyrosyl-[protein] + phosphate. In terms of biological role, tyrosine phosphatase which dephosphorylates or contributes to the dephosphorylation of CTNND1, FLT3, PDGFRB, MET, KDR, LYN, SRC, MAPK1, MAPK3, EGFR, TJP1, OCLN, PIK3R1 and PIK3R2. Plays a role in cell adhesion, migration, proliferation and differentiation. Has a role in megakaryocytes and platelet formation. Involved in vascular development. May be involved in the mechanism of contact inhibition of cell growth. Regulator of macrophage adhesion and spreading. Positively affects cell-matrix adhesion. Positive regulator of platelet activation and thrombosis. Negative regulator of cell proliferation. Negative regulator of PDGF-stimulated cell migration; through dephosphorylation of PDGFR. Positive regulator of endothelial cell survival, as well as of VEGF-induced SRC and AKT activation; through KDR dephosphorylation. Negative regulator of EGFR signaling pathway; through EGFR dephosphorylation. Enhances the barrier function of epithelial junctions during reassembly. Negatively regulates T-cell receptor (TCR) signaling. Upon T-cell TCR activation, it is up-regulated and excluded from the immunological synapses, while upon T-cell-antigen presenting cells (APC) disengagement, it is no longer excluded and can dephosphorylate PLCG1 and LAT to down-regulate prolongation of signaling. This chain is Receptor-type tyrosine-protein phosphatase eta (Ptprj), found in Mus musculus (Mouse).